A 342-amino-acid polypeptide reads, in one-letter code: S-adenosylmethionine:tRNA ribosyltransferase-isomerase (342 aa).

Belongs to the QueA family. In terms of assembly, monomer.

It is found in the cytoplasm. The catalysed reaction is 7-aminomethyl-7-carbaguanosine(34) in tRNA + S-adenosyl-L-methionine = epoxyqueuosine(34) in tRNA + adenine + L-methionine + 2 H(+). It participates in tRNA modification; tRNA-queuosine biosynthesis. Its function is as follows. Transfers and isomerizes the ribose moiety from AdoMet to the 7-aminomethyl group of 7-deazaguanine (preQ1-tRNA) to give epoxyqueuosine (oQ-tRNA). The sequence is that of S-adenosylmethionine:tRNA ribosyltransferase-isomerase from Bacillus velezensis (strain DSM 23117 / BGSC 10A6 / LMG 26770 / FZB42) (Bacillus amyloliquefaciens subsp. plantarum).